A 256-amino-acid polypeptide reads, in one-letter code: GCN5-related N-acetyltransferase 10, chloroplastic (256 aa).

A chloroplast-targeting transit peptide spans 1–41; sequence MGHLPQSLYSAAGPKFPYPGSSGLGVDQRKLTWSRFPVFLR. In terms of domain architecture, N-acetyltransferase spans 106–256; that stretch reads FMFFQAEVLS…RRVLMSKRFS (151 aa). Residues 178–180, 186–191, 217–219, and tyrosine 224 contribute to the acetyl-CoA site; these read LAV, RKKMAS, and DAA. The active-site Proton donor is the tyrosine 224.

Belongs to the acetyltransferase family. GNAT subfamily. In terms of assembly, oligomer. Autoacetylated. Expressed in green tissues.

It is found in the plastid. It localises to the chloroplast. The catalysed reaction is an N-terminal L-alpha-aminoacyl-[protein] + acetyl-CoA = N-terminal N(alpha)-acetyl-L-alpha-aminoacyl-[protein] + CoA + H(+). It carries out the reaction L-lysyl-[protein] + acetyl-CoA = N(6)-acetyl-L-lysyl-[protein] + CoA + H(+). The enzyme catalyses N-terminal L-methionyl-[protein] + acetyl-CoA = N-terminal N(alpha)-acetyl-L-methionyl-[protein] + CoA + H(+). It catalyses the reaction N-terminal L-seryl-[protein] + acetyl-CoA = N-terminal N(alpha)-acetyl-L-seryl-[protein] + CoA + H(+). The catalysed reaction is N-terminal L-valyl-[protein] + acetyl-CoA = N-terminal N(alpha)-acetyl-L-valyl-[protein] + CoA + H(+). It carries out the reaction N-terminal L-threonyl-[protein] + acetyl-CoA = N-terminal N(alpha)-acetyl-L-threonyl-[protein] + CoA + H(+). The enzyme catalyses N-terminal L-alanyl-[protein] + acetyl-CoA = N-terminal N(alpha)-acetyl-L-alanyl-[protein] + CoA + H(+). It catalyses the reaction N-terminal glycyl-[protein] + acetyl-CoA = N-terminal N(alpha)-acetylglycyl-[protein] + CoA + H(+). Functionally, protein acetyltransferase with dual specificity triggering both N-alpha-acetylation (NTA), with a preference for leucine, methionine, serine, valine and to a lower extent threonine and alanine as substrates (can also use glycine), and epsilon-lysine acetylation (KA) of several plastid proteins. The chain is GCN5-related N-acetyltransferase 10, chloroplastic from Arabidopsis thaliana (Mouse-ear cress).